The chain runs to 410 residues: Magnesium transporter NIPA3 (410 aa).

At 1 to 67 (MGAQVRLPPG…ISANVENKYS (67 aa)) the chain is on the extracellular side. Asn25, Asn35, and Asn50 each carry an N-linked (GlcNAc...) asparagine glycan. A helical transmembrane segment spans residues 68–88 (LYVGLVLAVSSSIFIGSSFIL). Topologically, residues 89-114 (KKKGLLQLASKGITRAGQGGHSYLKE) are cytoplasmic. A helical transmembrane segment spans residues 115–135 (WLWWVGLLSMGVGEAANFAAY). A topological domain (extracellular) is located at residue Ala136. The helical transmembrane segment at 137 to 157 (FAPATLVTPLGALSVLISAIL) threads the bilayer. Topologically, residues 158–165 (SSYFLNEH) are cytoplasmic. A helical membrane pass occupies residues 166–186 (LNIHGKIGCILSILGSTVMVI). At 187–207 (HAPQEEEVTSLHEMEMKLRDP) the chain is on the extracellular side. Residues 208–228 (GFISFAVIVTVISLVLILIVA) form a helical membrane-spanning segment. Residues 229–233 (PKKGQ) lie on the Cytoplasmic side of the membrane. A helical transmembrane segment spans residues 234–254 (TNILVYISICSLIGAFSVSSV). Residues 255 to 273 (KGLGIAIKELIEWKPVYKH) lie on the Extracellular side of the membrane. A helical transmembrane segment spans residues 274-294 (PLVFVLLAVLVLSVTTQINYL). Residues 295–304 (NKALDTFNTS) lie on the Cytoplasmic side of the membrane. The helical transmembrane segment at 305–325 (IVTPIYYVFFTSMVVTCSAIL) threads the bilayer. Topologically, residues 326–336 (FQEWYGMTAGD) are extracellular. Residues 337–357 (IIGTLSGFFTIIIGIFLLHAF) form a helical membrane-spanning segment. Over 358–410 (KNTDITWSELTSTAKKEAVSLNVSENNYVLLENLECSAPGYNDDVTLFSRTDD) the chain is Cytoplasmic.

It belongs to the NIPA family.

It is found in the golgi apparatus membrane. The enzyme catalyses Mg(2+)(in) = Mg(2+)(out). In terms of biological role, acts as a Mg(2+) transporter. Can also transport other divalent cations such as Fe(2+), Sr(2+), Ba(2+), Mn(2+), Cu(2+) and Co(2+) but to a much less extent than Mg(2+). This Pongo abelii (Sumatran orangutan) protein is Magnesium transporter NIPA3 (NIPAL1).